The primary structure comprises 243 residues: MLTFLIPTAKEMTIPKESHPHLLPQDSQAILKIMAAMTTEDLAKAYRIKEEAAKKEQQRWQDMASQKSLAYPAYQLFNGLMYRHIKRDKLTTQEQAYLTQQVYITSSFYGIIPANHPIAEHRHDFHTRIKIEGQSLKSYWRPCYNQFAKEHPQVISLLSSEFDDVFSKDCKQLWISPKFMAEKEGQFKTHSTISKKARGAFLTACMENNCQTVDSLKSLVFAGFYYHPDLSTDHEFVYIKKEA.

Belongs to the UPF0246 family.

In Streptococcus pyogenes serotype M3 (strain ATCC BAA-595 / MGAS315), this protein is UPF0246 protein SpyM3_1790.